The following is a 573-amino-acid chain: NADP-dependent malic enzyme, chloroplastic (573 aa).

The Proton donor role is filled by tyrosine 123. An NAD(+)-binding site is contributed by arginine 176. Lysine 194 (proton acceptor) is an active-site residue. A divalent metal cation contacts are provided by glutamate 265, aspartate 266, and aspartate 289. Aspartate 289 contacts NAD(+). Position 318-334 (318-334 (LFLGAGEAGTGIAELIA)) interacts with NADP(+). Asparagine 430 provides a ligand contact to NAD(+).

Belongs to the malic enzymes family. As to quaternary structure, homotetramer. Mg(2+) serves as cofactor. The cofactor is Mn(2+).

The protein localises to the plastid. It localises to the chloroplast. It carries out the reaction (S)-malate + NADP(+) = pyruvate + CO2 + NADPH. The enzyme catalyses oxaloacetate + H(+) = pyruvate + CO2. It functions in the pathway photosynthesis; C4 acid pathway. Its function is as follows. The chloroplastic ME isoform decarboxylates malate shuttled from neighboring mesophyll cells. The CO(2) released is then refixed by ribulose-bisphosphate carboxylase. This pathway eliminates the photorespiratory loss of CO(2) that occurs in most plants. The sequence is that of NADP-dependent malic enzyme, chloroplastic from Solanum lycopersicum (Tomato).